The sequence spans 417 residues: Gap junction alpha-3 protein (417 aa).

The stretch at 2–15 (GDWSFLGRLLENAQ) is an intramembrane region. Residues 16–19 (EHST) are Cytoplasmic-facing. A helical transmembrane segment spans residues 20–40 (VIGKVWLTVLFIFRILVLGAA). The Extracellular segment spans residues 41 to 71 (AEEVWGDEQSDFTCNTQQPGCENVCYDRAFP). 3 disulfides stabilise this stretch: Cys-54–Cys-198, Cys-61–Cys-192, and Cys-65–Cys-187. A helical membrane pass occupies residues 72 to 92 (ISHIRFWALQIIFVSTPTLIY). Topologically, residues 93–158 (LGHVLHIVRM…GALLRTYVFN (66 aa)) are cytoplasmic. Positions 110–128 (EEELLRRDNPQHGRGREPM) are enriched in basic and acidic residues. Residues 110 to 141 (EEELLRRDNPQHGRGREPMRTGSPRDPPLRDD) form a disordered region. Residues 159–179 (IIFKTLFEVGFIAGQYFLYGF) form a helical membrane-spanning segment. The Extracellular segment spans residues 180 to 207 (QLQPLYRCDRWPCPNTVDCFISRPTEKT). A helical transmembrane segment spans residues 208–228 (IFVIFMLAVACASLVLNMLEI). At 229 to 417 (YHLGWKKLKQ…GRARPGDLAI (189 aa)) the chain is on the cytoplasmic side. 2 disordered regions span residues 247 to 267 (DASE…SSGP) and 334 to 417 (RQVA…DLAI). The segment covering 342 to 353 (PASKPSSAASSP) has biased composition (low complexity).

This sequence belongs to the connexin family. Alpha-type (group II) subfamily. A hemichannel or connexon is composed of a hexamer of connexins. A functional gap junction is formed by the apposition of two hemichannels. Forms heteromeric channels with GJA8.

It is found in the cell membrane. Its subcellular location is the cell junction. It localises to the gap junction. Structural component of lens fiber gap junctions. Gap junctions are dodecameric channels that connect the cytoplasm of adjoining cells. They are formed by the docking of two hexameric hemichannels, one from each cell membrane. Small molecules and ions diffuse from one cell to a neighboring cell via the central pore. The polypeptide is Gap junction alpha-3 protein (Gja3) (Mus musculus (Mouse)).